A 46-amino-acid chain; its full sequence is L-amino-acid oxidase (46 aa).

Asparagine 31 carries N-linked (GlcNAc...) asparagine glycosylation.

Belongs to the flavin monoamine oxidase family. FIG1 subfamily. FAD is required as a cofactor.

Its subcellular location is the secreted. It is found in the lysosome. The protein resides in the cytoplasmic vesicle. It localises to the secretory vesicle. The protein localises to the acrosome. The catalysed reaction is an L-alpha-amino acid + O2 + H2O = a 2-oxocarboxylate + H2O2 + NH4(+). The enzyme catalyses L-tryptophan + O2 + H2O = indole-3-pyruvate + H2O2 + NH4(+). It catalyses the reaction L-phenylalanine + O2 + H2O = 3-phenylpyruvate + H2O2 + NH4(+). It carries out the reaction L-tyrosine + O2 + H2O = 3-(4-hydroxyphenyl)pyruvate + H2O2 + NH4(+). The catalysed reaction is L-arginine + O2 + H2O = 5-guanidino-2-oxopentanoate + H2O2 + NH4(+). It functions in the pathway amino-acid degradation; L-tryptophan degradation via pyruvate pathway. Functionally, secreted L-amino-acid oxidase that acts as a key immunoregulator. Has preference for L-aromatic amino acids: converts phenylalanine (Phe), tyrosine (Tyr) and tryptophan (Trp) to phenylpyruvic acid (PP), hydroxyphenylpyruvic acid (HPP), and indole-3-pyruvic acid (I3P), respectively. Also has weak L-arginine oxidase activity. Acts as a negative regulator of anti-tumor immunity by mediating Trp degradation via an indole pyruvate pathway that activates the transcription factor AHR. IL4I1-mediated Trp catabolism generates I3P, giving rise to indole metabolites (indole-3-acetic acid (IAA) and indole-3-aldehyde (I3A)) and kynurenic acid, which act as ligands for AHR, a ligand-activated transcription factor that plays important roles in immunity and cancer. AHR activation by indoles following IL4I1-mediated Trp degradation enhances tumor progression by promoting cancer cell motility and suppressing adaptive immunity. Also has an immunoregulatory function in some immune cells, probably by mediating Trp degradation and promoting downstream AHR activation: inhibits T-cell activation and proliferation, promotes the differentiation of naive CD4(+) T-cells into FOXP3(+) regulatory T-cells (Treg) and regulates the development and function of B-cells. Also regulates M2 macrophage polarization by inhibiting T-cell activation. Also has antibacterial properties by inhibiting growth of Gram negative and Gram positive bacteria through the production of NH4(+) and H2O2. This is L-amino-acid oxidase from Mus spretus (Western Mediterranean mouse).